A 383-amino-acid chain; its full sequence is Aliphatic nitrilase (383 aa).

One can recognise a CN hydrolase domain in the interval 13–288; it reads VKVATVQAEP…EGLLYAELDL (276 aa). Glutamate 53 serves as the catalytic Proton acceptor. Catalysis depends on lysine 136, which acts as the Proton donor. Catalysis depends on cysteine 170, which acts as the Nucleophile. The tract at residues 359 to 383 is disordered; sequence ATLPLDAPAPAPAPEQKSGRAKAEA.

This sequence belongs to the carbon-nitrogen hydrolase superfamily. Nitrilase family.

The enzyme catalyses an aliphatic nitrile + 2 H2O = a carboxylate + NH4(+). Its function is as follows. Acts on aliphatic nitriles such as acrylonitrile, crotononitrile and glutaronitrile. This chain is Aliphatic nitrilase, found in Rhodococcus rhodochrous.